A 331-amino-acid chain; its full sequence is 2-hydroxyacid dehydrogenase homolog (331 aa).

Residues 154–155 (HI), 234–236 (TSR), and Asp260 each bind NAD(+). Arg236 is a catalytic residue. Glu265 is a catalytic residue. His297 functions as the Proton donor in the catalytic mechanism. 297–300 (HQAF) is an NAD(+) binding site.

It belongs to the D-isomer specific 2-hydroxyacid dehydrogenase family.

The sequence is that of 2-hydroxyacid dehydrogenase homolog (ddh) from Zymomonas mobilis subsp. mobilis (strain ATCC 31821 / ZM4 / CP4).